A 101-amino-acid polypeptide reads, in one-letter code: UPF0473 protein str1961 (101 aa).

The protein belongs to the UPF0473 family.

This Streptococcus thermophilus (strain CNRZ 1066) protein is UPF0473 protein str1961.